The sequence spans 1398 residues: DNA-directed RNA polymerase subunit beta' (1398 aa).

Zn(2+) contacts are provided by C71, C73, C86, and C89. Positions 462, 464, and 466 each coordinate Mg(2+). Zn(2+) contacts are provided by C810, C883, C890, and C893. The tract at residues E1377 to E1398 is disordered. Low complexity predominate over residues A1380–P1392.

Belongs to the RNA polymerase beta' chain family. The RNAP catalytic core consists of 2 alpha, 1 beta, 1 beta' and 1 omega subunit. When a sigma factor is associated with the core the holoenzyme is formed, which can initiate transcription. Requires Mg(2+) as cofactor. It depends on Zn(2+) as a cofactor.

The catalysed reaction is RNA(n) + a ribonucleoside 5'-triphosphate = RNA(n+1) + diphosphate. In terms of biological role, DNA-dependent RNA polymerase catalyzes the transcription of DNA into RNA using the four ribonucleoside triphosphates as substrates. This Bradyrhizobium diazoefficiens (strain JCM 10833 / BCRC 13528 / IAM 13628 / NBRC 14792 / USDA 110) protein is DNA-directed RNA polymerase subunit beta'.